Reading from the N-terminus, the 470-residue chain is Chromosomal replication initiator protein DnaA (470 aa).

Positions 1 to 79 are domain I, interacts with DnaA modulators; that stretch reads MTDDTWGLLR…AVQRLAFKVA (79 aa). A domain II region spans residues 79 to 128; the sequence is AANSPTRPVQPTMSEAIEEPAPLQTTVVDQLGNQEGNTSVKSPPEDLQAA. The tract at residues 129–350 is domain III, AAA+ region; it reads PLDPRFTFDS…GALTRLFAFA (222 aa). G173, G175, K176, and T177 together coordinate ATP. The interval 351–470 is domain IV, binds dsDNA; it reads SLVGREIDMD…VEMLRRSLEA (120 aa).

This sequence belongs to the DnaA family. Oligomerizes as a right-handed, spiral filament on DNA at oriC.

Its subcellular location is the cytoplasm. Its function is as follows. Plays an essential role in the initiation and regulation of chromosomal replication. ATP-DnaA binds to the origin of replication (oriC) to initiate formation of the DNA replication initiation complex once per cell cycle. Binds the DnaA box (a 9 base pair repeat at the origin) and separates the double-stranded (ds)DNA. Forms a right-handed helical filament on oriC DNA; dsDNA binds to the exterior of the filament while single-stranded (ss)DNA is stabiized in the filament's interior. The ATP-DnaA-oriC complex binds and stabilizes one strand of the AT-rich DNA unwinding element (DUE), permitting loading of DNA polymerase. After initiation quickly degrades to an ADP-DnaA complex that is not apt for DNA replication. Binds acidic phospholipids. In Ruegeria sp. (strain TM1040) (Silicibacter sp.), this protein is Chromosomal replication initiator protein DnaA.